Reading from the N-terminus, the 220-residue chain is Fructose-6-phosphate aldolase (220 aa).

Lysine 85 serves as the catalytic Schiff-base intermediate with substrate.

Belongs to the transaldolase family. Type 3A subfamily. Homodecamer.

It is found in the cytoplasm. It catalyses the reaction beta-D-fructose 6-phosphate = dihydroxyacetone + D-glyceraldehyde 3-phosphate. In terms of biological role, catalyzes the reversible formation of fructose 6-phosphate from dihydroxyacetone and D-glyceraldehyde 3-phosphate via an aldolization reaction. The sequence is that of Fructose-6-phosphate aldolase from Klebsiella pneumoniae subsp. pneumoniae (strain ATCC 700721 / MGH 78578).